The sequence spans 144 residues: Large ribosomal subunit protein uL15 (144 aa).

Residues 1–10 are compositionally biased toward polar residues; sequence MYLNTISPSR. The tract at residues 1–51 is disordered; sequence MYLNTISPSRGSKHLSKRVGRGIGSGLGKTGGRGHKGQKSRSGGKVRLGFE. Residues 11–20 are compositionally biased toward basic residues; sequence GSKHLSKRVG. Residues 21–31 show a composition bias toward gly residues; it reads RGIGSGLGKTG. The segment covering 32–44 has biased composition (basic residues); sequence GRGHKGQKSRSGG.

The protein belongs to the universal ribosomal protein uL15 family. Part of the 50S ribosomal subunit.

In terms of biological role, binds to the 23S rRNA. The sequence is that of Large ribosomal subunit protein uL15 from Blochmanniella pennsylvanica (strain BPEN).